Here is a 1059-residue protein sequence, read N- to C-terminus: Carbamoyl phosphate synthase large chain (1059 aa).

The tract at residues 1–401 (MPKRQDISKI…AMLKAVRSLE (401 aa)) is carboxyphosphate synthetic domain. ATP is bound by residues Arg129, Arg169, Gly175, Gly176, Arg208, Ile210, Glu215, Gly241, Ile242, His243, Gln284, and Glu298. The ATP-grasp 1 domain occupies 133-327 (KALMERLNEP…IAKMAAKIAV (195 aa)). 3 residues coordinate Mg(2+): Gln284, Glu298, and Asn300. Mn(2+) contacts are provided by Gln284, Glu298, and Asn300. The oligomerization domain stretch occupies residues 402–546 (IGAIGLDDIT…YATYEQENES (145 aa)). The interval 547-929 (IISTKKSVLV…ALYKAFIASN (383 aa)) is carbamoyl phosphate synthetic domain. The region spanning 671-861 (DQVIKELALP…LAQLATRVML (191 aa)) is the ATP-grasp 2 domain. Arg707, Ser746, Leu748, Glu752, Gly777, Val778, His779, Ser780, Gln820, and Glu832 together coordinate ATP. Gln820, Glu832, and Asn834 together coordinate Mg(2+). 3 residues coordinate Mn(2+): Gln820, Glu832, and Asn834. One can recognise an MGS-like domain in the interval 930–1059 (IKVPRYGNVL…SRSFTVKEMH (130 aa)). The interval 930–1059 (IKVPRYGNVL…SRSFTVKEMH (130 aa)) is allosteric domain.

Belongs to the CarB family. Composed of two chains; the small (or glutamine) chain promotes the hydrolysis of glutamine to ammonia, which is used by the large (or ammonia) chain to synthesize carbamoyl phosphate. Tetramer of heterodimers (alpha,beta)4. Requires Mg(2+) as cofactor. The cofactor is Mn(2+).

The enzyme catalyses hydrogencarbonate + L-glutamine + 2 ATP + H2O = carbamoyl phosphate + L-glutamate + 2 ADP + phosphate + 2 H(+). It carries out the reaction hydrogencarbonate + NH4(+) + 2 ATP = carbamoyl phosphate + 2 ADP + phosphate + 2 H(+). It participates in amino-acid biosynthesis; L-arginine biosynthesis; carbamoyl phosphate from bicarbonate: step 1/1. The protein operates within pyrimidine metabolism; UMP biosynthesis via de novo pathway; (S)-dihydroorotate from bicarbonate: step 1/3. Functionally, large subunit of the glutamine-dependent carbamoyl phosphate synthetase (CPSase). CPSase catalyzes the formation of carbamoyl phosphate from the ammonia moiety of glutamine, carbonate, and phosphate donated by ATP, constituting the first step of 2 biosynthetic pathways, one leading to arginine and/or urea and the other to pyrimidine nucleotides. The large subunit (synthetase) binds the substrates ammonia (free or transferred from glutamine from the small subunit), hydrogencarbonate and ATP and carries out an ATP-coupled ligase reaction, activating hydrogencarbonate by forming carboxy phosphate which reacts with ammonia to form carbamoyl phosphate. The polypeptide is Carbamoyl phosphate synthase large chain (Leuconostoc mesenteroides subsp. mesenteroides (strain ATCC 8293 / DSM 20343 / BCRC 11652 / CCM 1803 / JCM 6124 / NCDO 523 / NBRC 100496 / NCIMB 8023 / NCTC 12954 / NRRL B-1118 / 37Y)).